The chain runs to 742 residues: Two pore calcium channel protein 1 (742 aa).

A disordered region spans residues 1–37; that stretch reads MSEAEAPLITEEAAERGLASSGSRRLSDGAGGQGSRK. The Cytoplasmic segment spans residues 1 to 82; the sequence is MSEAEAPLIT…NDTRFGRAMS (82 aa). The chain crosses the membrane as a helical span at residues 83–103; the sequence is FYFVYLRLDWLWSLNLFALIL. Topologically, residues 104–140 are extracellular; the sequence is LNFLEKPLWCRKDALQAYDQRDLYFLGQLPYFSKTES. Residues 141 to 161 traverse the membrane as a helical segment; sequence LIYEGLTLVILVMDIFCPLSY. The Cytoplasmic portion of the chain corresponds to 162–176; that stretch reads EGLNIFWRSTTNKLK. A helical transmembrane segment spans residues 177–197; that stretch reads IVLLFILACDILVFAFSSQPF. The Extracellular portion of the chain corresponds to 198-204; it reads RLAPYIR. A helical; Voltage-sensor membrane pass occupies residues 205–226; the sequence is VVFLIMTIRELRMCAITLAGLI. The helical transmembrane segment at 227-247 threads the bilayer; it reads GTYLNVLALSLLFLLFASWLA. Topologically, residues 248 to 258 are extracellular; the sequence is YVTFEDTPQGK. The segment at residues 259 to 273 is an intramembrane region (pore-forming); it reads TIFSSYGVTLYQMFV. Over 274 to 296 the chain is Extracellular; it reads LFTTSNNPDVWVHAYKIPRWYSL. Residues 297–317 traverse the membrane as a helical segment; the sequence is FFIVYVLLGVYFLTNLILAVI. The Cytoplasmic portion of the chain corresponds to 318-446; that stretch reads YDSFKEQFAK…SFVRSRMFEY (129 aa). EF-hand domains lie at 335 to 370 and 376 to 411; these read IRKNILQKAFDLIDTNNRGYLDREQCISLLNELNKY and TSREDFELIFAELDRSGDFKVTSEEFADLCNTIAIK. The helical transmembrane segment at 447-467 threads the bilayer; sequence IIVFVLLINLVAVIIETTLDI. Residues 468-480 lie on the Extracellular side of the membrane; that stretch reads ENSSSQETWQEVE. Asn469 carries an N-linked (GlcNAc...) asparagine glycan. Residues 481–501 traverse the membrane as a helical segment; the sequence is FFLGWIYVAEMALKIFSLGFG. Residues 502–510 lie on the Cytoplasmic side of the membrane; sequence AYWMEGQNK. A helical membrane pass occupies residues 511 to 531; it reads FDFVLTWTIFIGETLTFAFPS. Residues 532 to 540 are Extracellular-facing; that stretch reads KLPFLSNGE. The helical; Voltage-sensor transmembrane segment at 541-558 threads the bilayer; the sequence is WIRYLLLGRVLRLTRILL. The Cytoplasmic segment spans residues 559-582; it reads QVQRFRAFVATFFTLMSSLMPYLG. The chain crosses the membrane as a helical span at residues 583–603; it reads IVFCVLCMYCSIGLQIFGGIV. Over 604 to 627 the chain is Extracellular; the sequence is YAGNPTLEETDLFNNDYLLFNFND. The pore-forming intramembrane region spans 628–642; it reads YPSGMVTLFNLLVMG. At 643–663 the chain is on the extracellular side; it reads NWQVWMESYWQLTGTSWSLIY. A helical membrane pass occupies residues 664-684; that stretch reads FVSFYLISILLLLNLIVAFVL. Topologically, residues 685–742 are cytoplasmic; it reads EAFFAEMELEKGEEVDIQNPTSGGIKKRRSMRVRSKGTMVDILLHHMLSNELDGSQNS.

This sequence belongs to the calcium channel alpha-1 subunit (TC 1.A.1.11) family. Two pore calcium channel subfamily. Homodimer.

The protein resides in the membrane. Inhibited by Al(3+). Functionally, functions as a voltage-gated inward-rectifying Ca(2+) channel (VDCC) across the plasma membrane that mediates sucrose-induced Ca(2+) influx in autotrophically grown leaf cells. Acts as the major ROS-responsive Ca(2+) channel and is the possible target of Al-dependent inhibition. Plays a regulatory role in defense responses. This is Two pore calcium channel protein 1 (TPC1) from Triticum aestivum (Wheat).